The following is a 506-amino-acid chain: Acetaldehyde dehydrogenase (506 aa).

Active-site residues include glutamate 262 and cysteine 301.

It belongs to the aldehyde dehydrogenase family.

It carries out the reaction acetaldehyde + NAD(+) + H2O = acetate + NADH + 2 H(+). It participates in alcohol metabolism; ethanol degradation; acetate from ethanol: step 2/2. Catalyzes the NAD(+)-dependent oxidation of acetaldehyde to acetate. Is likely a component of the ethanol oxidation system that allows P.aeruginosa to grow on ethanol as the sole carbon and energy source. The sequence is that of Acetaldehyde dehydrogenase from Pseudomonas aeruginosa.